We begin with the raw amino-acid sequence, 783 residues long: Probable phosphoketolase (783 aa).

It belongs to the XFP family. It depends on thiamine diphosphate as a cofactor.

This Rhodopseudomonas palustris (strain TIE-1) protein is Probable phosphoketolase.